Here is a 159-residue protein sequence, read N- to C-terminus: Large ribosomal subunit protein uL15 (159 aa).

A disordered region spans residues 1–39 (MKLNELSPADGSTKKRMRVGRGVGSGKGKTAGRGVKGQN). Gly residues predominate over residues 21–35 (RGVGSGKGKTAGRGV).

Belongs to the universal ribosomal protein uL15 family. Part of the 50S ribosomal subunit.

Functionally, binds to the 23S rRNA. The polypeptide is Large ribosomal subunit protein uL15 (Hyphomonas neptunium (strain ATCC 15444)).